We begin with the raw amino-acid sequence, 208 residues long: Ribonuclease HII (208 aa).

The 193-residue stretch at 11-203 folds into the RNase H type-2 domain; the sequence is GPVAGVDEAG…VAAAHEQWLK (193 aa). 3 residues coordinate a divalent metal cation: D17, E18, and D112.

It belongs to the RNase HII family. Requires Mn(2+) as cofactor. The cofactor is Mg(2+).

The protein resides in the cytoplasm. It carries out the reaction Endonucleolytic cleavage to 5'-phosphomonoester.. In terms of biological role, endonuclease that specifically degrades the RNA of RNA-DNA hybrids. This Corynebacterium jeikeium (strain K411) protein is Ribonuclease HII.